The sequence spans 71 residues: Prokaryotic ubiquitin-like protein Pup (71 aa).

A compositionally biased stretch (basic and acidic residues) spans 1–18; it reads MPEKDTGGQHRATRRTEE. The disordered stretch occupies residues 1 to 36; the sequence is MPEKDTGGQHRATRRTEEHDETIDEATATSDVQERR. The ARC ATPase binding stretch occupies residues 27-65; it reads TATSDVQERREKLDADVDAILDEIDDVLEENAEEFVRSY. The stretch at 30–59 forms a coiled coil; it reads SDVQERREKLDADVDAILDEIDDVLEENAE. An Isoglutamyl lysine isopeptide (Glu-Lys) (interchain with K-? in acceptor proteins) cross-link involves residue E71.

The protein belongs to the prokaryotic ubiquitin-like protein family. Strongly interacts with the proteasome-associated ATPase ARC through a hydrophobic interface; the interacting region of Pup lies in its C-terminal half. There is one Pup binding site per ARC hexamer ring.

It functions in the pathway protein degradation; proteasomal Pup-dependent pathway. Functionally, protein modifier that is covalently attached to lysine residues of substrate proteins, thereby targeting them for proteasomal degradation. The tagging system is termed pupylation. The sequence is that of Prokaryotic ubiquitin-like protein Pup from Acidothermus cellulolyticus (strain ATCC 43068 / DSM 8971 / 11B).